The chain runs to 253 residues: Transposase for insertion sequence element IS904 (253 aa).

An Integrase catalytic domain is found at 90 to 253 (KATAPNKVWL…SPKDFEKYNS (164 aa)).

It belongs to the transposase IS3/IS150/IS904 family.

In terms of biological role, involved in the transposition of the insertion sequence. The sequence is that of Transposase for insertion sequence element IS904 (nisX1) from Lactococcus lactis subsp. lactis (strain IL1403) (Streptococcus lactis).